The chain runs to 939 residues: MNEDQFPKAYDPKSSETGVYSFWERSGMFVANASSEKPAYSIVMPPPNVTGILHMGHALVNTLQDTLIRYKRMQGFEVCWVPGTDHAGIATQTVVERHLKASLGKRRTDFSREEFLKHVWDWKEKSQNVILSQLRQLGCSCDWSRQRFTMDPGANRAVKKAFKILFDKGVIYRGYYLVNWDPILQTALADDEVEYEERDGWLYYIRYQVVNSEEFITVATTRPETLLGDTAIAVSPEDQRYSHLIGAKVVVPFVNREIPIIGDFSVDASFGTGAVKITPAHDKDDYKTGMNHQLPMINILTSTGEINENGGIFTGLSREVARENIITSLEALGLFVKKEAYSSRVGVSYRSGAIIEPYLSKQWFVSVDSFRDSLREFVNSEEIRIFPPEFVRNYLTWVNNLKDWCISRQLWWGHRIPVWHNKHDENVICFDGEGGPEEVMRDPESWYQDPDVLDTWFSSGLWPLTCFGWPDEDSLDLKKFYPTAVLVTGHDILFFWVTRMVLMCSAMVDTEPFSDVFLHGLIFGKSYREYDEKGEWFYVSGERKRDYDKGKALPKNVVAKWEKLSKSKGNVIDPIEMIEAYGADAVRLTLCSCANRGEQIDLDYRLFEEYKNFINKLWNGARFIFGHISELTSRDLEEGVNQDLLGLEDFYILDRFNELLDLIDGHYNCYSFDKIASLAYDFFKNDLCSTYLEIIKPTLFGKQGSDQQRATKRKLLATLLINILGVLHPIVPYITETLFQKLKATLGTVENGKGDSVTGHAVSMLRSEACMVAEYPKPIHVAFPQGLRESFGIAERLVYTIRNIRGEMQLDPREPLQAFVISSEKKELVDVCIPIMCALGGVKTVEQLAEAPKDSIFSLGVVEGIQVGVILPPEHLAKERVRLEKEKTRLEKSIDSVSKLLASEDFRTRANPSLVQAKKDSLRNSQRELQSILDKLASL.

Positions 47-57 (PNVTGILHMGH) match the 'HIGH' region motif. The short motif at 563–567 (KLSKS) is the 'KMSKS' region element. Residue Lys-566 participates in ATP binding. Residues 874-939 (EHLAKERVRL…QSILDKLASL (66 aa)) are a coiled coil.

It belongs to the class-I aminoacyl-tRNA synthetase family. ValS type 1 subfamily. As to quaternary structure, monomer.

The protein localises to the cytoplasm. The enzyme catalyses tRNA(Val) + L-valine + ATP = L-valyl-tRNA(Val) + AMP + diphosphate. Catalyzes the attachment of valine to tRNA(Val). As ValRS can inadvertently accommodate and process structurally similar amino acids such as threonine, to avoid such errors, it has a 'posttransfer' editing activity that hydrolyzes mischarged Thr-tRNA(Val) in a tRNA-dependent manner. This is Valine--tRNA ligase from Chlamydia trachomatis serovar L2 (strain ATCC VR-902B / DSM 19102 / 434/Bu).